Consider the following 108-residue polypeptide: Iron-sulfur cluster assembly protein CyaY (108 aa).

It belongs to the frataxin family.

Its function is as follows. Involved in iron-sulfur (Fe-S) cluster assembly. May act as a regulator of Fe-S biogenesis. The protein is Iron-sulfur cluster assembly protein CyaY of Pseudomonas aeruginosa (strain ATCC 15692 / DSM 22644 / CIP 104116 / JCM 14847 / LMG 12228 / 1C / PRS 101 / PAO1).